The chain runs to 372 residues: Phospho-2-dehydro-3-deoxyheptonate aldolase, tyrosine-inhibited (372 aa).

This sequence belongs to the class-I DAHP synthase family.

The protein resides in the cytoplasm. It is found in the nucleus. It catalyses the reaction D-erythrose 4-phosphate + phosphoenolpyruvate + H2O = 7-phospho-2-dehydro-3-deoxy-D-arabino-heptonate + phosphate. It participates in metabolic intermediate biosynthesis; chorismate biosynthesis; chorismate from D-erythrose 4-phosphate and phosphoenolpyruvate: step 1/7. In terms of biological role, stereospecific condensation of phosphoenolpyruvate (PEP) and D-erythrose-4-phosphate (E4P) giving rise to 3-deoxy-D-arabino-heptulosonate-7-phosphate (DAHP). This Schizosaccharomyces pombe (strain 972 / ATCC 24843) (Fission yeast) protein is Phospho-2-dehydro-3-deoxyheptonate aldolase, tyrosine-inhibited (aro4).